Reading from the N-terminus, the 339-residue chain is Catalase-related peroxidase (339 aa).

The signal sequence occupies residues 1–31; that stretch reads MIRIRNRWFRWLAIALASLVASIGIATVGFA. The active site involves H58. Y328 serves as a coordination point for heme.

Belongs to the catalase family. Heme serves as cofactor.

It localises to the periplasm. Has an organic peroxide-dependent peroxidase activity. The sequence is that of Catalase-related peroxidase (srpA) from Synechococcus elongatus (strain ATCC 33912 / PCC 7942 / FACHB-805) (Anacystis nidulans R2).